We begin with the raw amino-acid sequence, 428 residues long: tRNA modification GTPase MnmE (428 aa).

(6S)-5-formyl-5,6,7,8-tetrahydrofolate contacts are provided by R20, E76, and R116. A TrmE-type G domain is found at 212–351; it reads GFEVAIIGAP…LVEALQDRLL (140 aa). N222 lines the K(+) pocket. GTP contacts are provided by residues 222-227, 241-247, and 266-269; these read NAGKST, SEVAGTT, and DTAG. S226 serves as a coordination point for Mg(2+). Positions 241, 243, and 246 each coordinate K(+). Position 247 (T247) interacts with Mg(2+). Residue K428 coordinates (6S)-5-formyl-5,6,7,8-tetrahydrofolate.

This sequence belongs to the TRAFAC class TrmE-Era-EngA-EngB-Septin-like GTPase superfamily. TrmE GTPase family. In terms of assembly, homodimer. Heterotetramer of two MnmE and two MnmG subunits. The cofactor is K(+).

The protein localises to the cytoplasm. Its function is as follows. Exhibits a very high intrinsic GTPase hydrolysis rate. Involved in the addition of a carboxymethylaminomethyl (cmnm) group at the wobble position (U34) of certain tRNAs, forming tRNA-cmnm(5)s(2)U34. The sequence is that of tRNA modification GTPase MnmE from Cereibacter sphaeroides (strain ATCC 17025 / ATH 2.4.3) (Rhodobacter sphaeroides).